The sequence spans 191 residues: Adenine phosphoribosyltransferase 5 (191 aa).

This sequence belongs to the purine/pyrimidine phosphoribosyltransferase family. As to quaternary structure, homodimer.

The protein resides in the cytoplasm. It carries out the reaction AMP + diphosphate = 5-phospho-alpha-D-ribose 1-diphosphate + adenine. Its pathway is purine metabolism; AMP biosynthesis via salvage pathway; AMP from adenine: step 1/1. Functionally, catalyzes a salvage reaction resulting in the formation of AMP, that is energically less costly than de novo synthesis. May contribute to the recycling of adenine into adenylate nucleotides and the inactivation of cytokinins by phosphoribosylation. Possesses low activity toward adenine, but can efficiently convert cytokinins from free bases (active form) to the corresponding nucleotides (inactive form). This is Adenine phosphoribosyltransferase 5 (APT5) from Arabidopsis thaliana (Mouse-ear cress).